The primary structure comprises 306 residues: Aspartate carbamoyltransferase catalytic subunit (306 aa).

Carbamoyl phosphate-binding residues include arginine 55 and threonine 56. Lysine 84 provides a ligand contact to L-aspartate. Arginine 105, histidine 133, and glutamine 136 together coordinate carbamoyl phosphate. Arginine 166 and arginine 227 together coordinate L-aspartate. Positions 265 and 266 each coordinate carbamoyl phosphate.

This sequence belongs to the aspartate/ornithine carbamoyltransferase superfamily. ATCase family. Heterododecamer (2C3:3R2) of six catalytic PyrB chains organized as two trimers (C3), and six regulatory PyrI chains organized as three dimers (R2).

It catalyses the reaction carbamoyl phosphate + L-aspartate = N-carbamoyl-L-aspartate + phosphate + H(+). Its pathway is pyrimidine metabolism; UMP biosynthesis via de novo pathway; (S)-dihydroorotate from bicarbonate: step 2/3. Its function is as follows. Catalyzes the condensation of carbamoyl phosphate and aspartate to form carbamoyl aspartate and inorganic phosphate, the committed step in the de novo pyrimidine nucleotide biosynthesis pathway. This Neisseria gonorrhoeae (strain NCCP11945) protein is Aspartate carbamoyltransferase catalytic subunit.